The following is a 195-amino-acid chain: uncharacterized protein (195 aa).

The N-terminal stretch at methionine 1–glycine 20 is a signal peptide. The segment at isoleucine 26–asparagine 195 is disordered. Residue asparagine 28 is glycosylated (N-linked (GlcNAc...) asparagine). Composition is skewed to low complexity over residues lysine 29–serine 43 and glutamine 74–glutamine 104. Polar residues-rich tracts occupy residues aspartate 112–tyrosine 123 and proline 151–proline 176.

In terms of tissue distribution, component of the acid-soluble organic matrix of calcified layers of the shell (at protein level).

It is found in the secreted. This is an uncharacterized protein from Lottia gigantea (Giant owl limpet).